Here is a 523-residue protein sequence, read N- to C-terminus: GMP synthase [glutamine-hydrolyzing] (523 aa).

One can recognise a Glutamine amidotransferase type-1 domain in the interval 8–205 (KILILDFGSQ…VVNICGCETK (198 aa)). C85 serves as the catalytic Nucleophile. Active-site residues include H179 and E181. Residues 206-398 (WTAENIIEDA…LGLPAEMINR (193 aa)) form the GMPS ATP-PPase domain. Residue 233–239 (SGGVDSS) participates in ATP binding.

Homodimer.

It catalyses the reaction XMP + L-glutamine + ATP + H2O = GMP + L-glutamate + AMP + diphosphate + 2 H(+). It functions in the pathway purine metabolism; GMP biosynthesis; GMP from XMP (L-Gln route): step 1/1. Catalyzes the synthesis of GMP from XMP. The sequence is that of GMP synthase [glutamine-hydrolyzing] from Haemophilus influenzae (strain PittGG).